The chain runs to 1416 residues: Isonitrile lipopeptide synthase (1416 aa).

Residues 188–215 (LRETAKVAEALRRQADAVQRELTAEAGQ) are a coiled coil. The Carrier domain occupies 965–1028 (RVWSRHLGRP…NLVCDLGSNP (64 aa)). The residue at position 988 (Ser-988) is an O-(pantetheine 4'-phosphoryl)serine.

It belongs to the ATP-dependent AMP-binding enzyme family. Requires pantetheine 4'-phosphate as cofactor.

The enzyme catalyses 2 a (3R)-3-isocyanyl-fatty acyl-[ACP] + L-lysine + ATP + 2 NADPH = an isonitrile lipopeptide + 2 holo-[ACP] + AMP + diphosphate + 2 NADP(+). In terms of biological role, nonribosomal peptide synthetase (NRPS) involved in the biosynthesis of a unique class of isonitrile lipopeptides (INLPs) that seem to play a role in metal acquisition in M.marinum. Catalyzes the final step in the pathway, i.e. the condensation of a (3R)-3-isocyanyl-fatty acyl-[ACP] to both amino groups of a lysine, producing isonitrile lipopeptides. The polypeptide is Isonitrile lipopeptide synthase (Mycobacterium marinum (strain ATCC BAA-535 / M)).